We begin with the raw amino-acid sequence, 1919 residues long: Protein TIC 214 (1919 aa).

6 helical membrane-spanning segments follow: residues 18 to 38, 67 to 87, 90 to 110, 127 to 147, 175 to 195, and 224 to 244; these read IINSVVVVGLYYGFLTTFSIG, FITGQLMMFISIYYAPLHLAL, PHTITVLALPYLLFHFFWNNH, LSIQCVFLNNLIFQLFNHFIL, VGWLIGHILFMKWVGLVLVWI, and IFSILLFITCVYYLGRIPSPI. Disordered stretches follow at residues 250 to 375, 1107 to 1129, and 1606 to 1636; these read KETP…GKEK, IKSITKEKKKGTPGIKSSPNKRS, and ELKNRNQEEKEPADRGDLGSDAQNQGNRRFV. Composition is skewed to acidic residues over residues 259–269, 278–288, 297–307, 316–328, and 355–366; these read GESEEETDVEI, GESEEETDVEIET, and EKEDPDKIDETE. The span at 1107–1117 shows a compositional bias: basic residues; that stretch reads IKSITKEKKKG. The span at 1606–1623 shows a compositional bias: basic and acidic residues; sequence ELKNRNQEEKEPADRGDL. Residues 1626-1636 show a composition bias toward polar residues; it reads DAQNQGNRRFV.

This sequence belongs to the TIC214 family. Part of the Tic complex.

It is found in the plastid. The protein resides in the chloroplast inner membrane. Its function is as follows. Involved in protein precursor import into chloroplasts. May be part of an intermediate translocation complex acting as a protein-conducting channel at the inner envelope. The protein is Protein TIC 214 of Panax ginseng (Korean ginseng).